An 88-amino-acid polypeptide reads, in one-letter code: Small ribosomal subunit protein uS15c (88 aa).

It belongs to the universal ribosomal protein uS15 family. Part of the 30S ribosomal subunit.

It localises to the plastid. The protein localises to the chloroplast. The polypeptide is Small ribosomal subunit protein uS15c (rps15) (Marchantia polymorpha (Common liverwort)).